We begin with the raw amino-acid sequence, 216 residues long: Pyrophosphatase PpaX (216 aa).

The active-site Nucleophile is the Asp-12.

This sequence belongs to the HAD-like hydrolase superfamily. PpaX family. The cofactor is Mg(2+).

The enzyme catalyses diphosphate + H2O = 2 phosphate + H(+). Hydrolyzes pyrophosphate formed during P-Ser-HPr dephosphorylation by HPrK/P. Might play a role in controlling the intracellular pyrophosphate pool. The sequence is that of Pyrophosphatase PpaX from Bacillus velezensis (strain DSM 23117 / BGSC 10A6 / LMG 26770 / FZB42) (Bacillus amyloliquefaciens subsp. plantarum).